We begin with the raw amino-acid sequence, 152 residues long: Cytochrome c-type biogenesis CcmH-like mitochondrial protein (152 aa).

The Mitochondrial intermembrane segment spans residues 1–83 (MATEEDVKQR…ILYTPKFDLQ (83 aa)). 2 residues coordinate heme: Cys-26 and Cys-29. A helical transmembrane segment spans residues 84-104 (TAAIWLSPVIVGGVAAGVWAY). The Mitochondrial matrix portion of the chain corresponds to 105–152 (QKHRQRTNVHIMALNLVRGVPLTPREKETMLDVLTPPPPANKWWWPGK).

The protein belongs to the CcmH/CycL/Ccl2/NrfF family.

It localises to the mitochondrion inner membrane. Its function is as follows. Plays a role in mitochondrial cytochrome c maturation. Probable component of a heme lyase complex involved in the reduction of apocytochrome c. The chain is Cytochrome c-type biogenesis CcmH-like mitochondrial protein from Oryza sativa subsp. japonica (Rice).